The following is a 349-amino-acid chain: UDP-3-O-acylglucosamine N-acyltransferase (349 aa).

His-246 serves as the catalytic Proton acceptor.

Belongs to the transferase hexapeptide repeat family. LpxD subfamily. As to quaternary structure, homotrimer.

It carries out the reaction a UDP-3-O-[(3R)-3-hydroxyacyl]-alpha-D-glucosamine + a (3R)-hydroxyacyl-[ACP] = a UDP-2-N,3-O-bis[(3R)-3-hydroxyacyl]-alpha-D-glucosamine + holo-[ACP] + H(+). It functions in the pathway bacterial outer membrane biogenesis; LPS lipid A biosynthesis. Functionally, catalyzes the N-acylation of UDP-3-O-acylglucosamine using 3-hydroxyacyl-ACP as the acyl donor. Is involved in the biosynthesis of lipid A, a phosphorylated glycolipid that anchors the lipopolysaccharide to the outer membrane of the cell. This Protochlamydia amoebophila (strain UWE25) protein is UDP-3-O-acylglucosamine N-acyltransferase.